The primary structure comprises 195 residues: Ribonuclease HII (195 aa).

Residues 8 to 195 enclose the RNase H type-2 domain; sequence WGVVGVDEAG…FAPVRRLLGG (188 aa). The a divalent metal cation site is built by Asp14, Glu15, and Asp106.

It belongs to the RNase HII family. It depends on Mn(2+) as a cofactor. Mg(2+) serves as cofactor.

It is found in the cytoplasm. The catalysed reaction is Endonucleolytic cleavage to 5'-phosphomonoester.. Functionally, endonuclease that specifically degrades the RNA of RNA-DNA hybrids. This chain is Ribonuclease HII, found in Halorhodospira halophila (strain DSM 244 / SL1) (Ectothiorhodospira halophila (strain DSM 244 / SL1)).